The primary structure comprises 84 residues: MAKTQSPLQWLATTIIRGYQLLISPMLGPRCRFNPTCSHYAIEAIRLHGFVKGCWFAAKRILRCHPLHPGGEDPVPNKKHRCDK.

It belongs to the UPF0161 family.

Its subcellular location is the cell inner membrane. In terms of biological role, could be involved in insertion of integral membrane proteins into the membrane. The protein is Putative membrane protein insertion efficiency factor of Shewanella halifaxensis (strain HAW-EB4).